The primary structure comprises 198 residues: Sensory transduction protein RegX3 (198 aa).

Residues 1–87 enclose the Response regulatory domain; it reads MVTDGPAALA…ELIARIRAVL (87 aa). D23 is subject to 4-aspartylphosphate. Positions 99–198 form a DNA-binding region, ompR/PhoB-type; that stretch reads DGVLESGPLR…VRGLGYKLES (100 aa).

Post-translationally, phosphorylated by SenX3.

Its function is as follows. Member of the two-component regulatory system SenX3/RegX3. The chain is Sensory transduction protein RegX3 (rgx3) from Mycobacterium leprae (strain TN).